Consider the following 443-residue polypeptide: Threonine/serine transporter TdcC (443 aa).

11 consecutive transmembrane segments (helical) span residues 22–42, 44–64, 97–117, 140–160, 163–183, 207–227, 259–279, 319–339, 366–386, 389–409, and 423–443; these read TTWTLGLFGTAIGAGVLFFPI, AGFGGLIPILLMLVLAYPIAF, GVVITFLYFFAICPLLWIYGV, VVALFLLLLMAFVIWFGKDLM, VMSYLVWPFIASLVLISLSLI, ILVTVWLGISIMVFSFNFSPI, ASMLMVAVVMFFAFSCLFTLS, ASIIALVAIFKSFFGHYLGTL, ISMIFIMGSTWIVAYANPNIL, IEAMGAPIIASLLCLLPMYAI, and DNVFVTLIGLLTILNIVYKLF.

This sequence belongs to the amino acid/polyamine transporter 2 family. SdaC/TdcC subfamily.

Its subcellular location is the cell inner membrane. It catalyses the reaction L-threonine(in) + H(+)(in) = L-threonine(out) + H(+)(out). It carries out the reaction L-serine(in) + H(+)(in) = L-serine(out) + H(+)(out). Its function is as follows. Involved in the import of threonine and serine into the cell, with the concomitant import of a proton (symport system). The chain is Threonine/serine transporter TdcC from Salmonella arizonae (strain ATCC BAA-731 / CDC346-86 / RSK2980).